We begin with the raw amino-acid sequence, 435 residues long: Citrate synthase (435 aa).

Residues H311 and D370 contribute to the active site.

It belongs to the citrate synthase family.

It carries out the reaction oxaloacetate + acetyl-CoA + H2O = citrate + CoA + H(+). It functions in the pathway carbohydrate metabolism; tricarboxylic acid cycle; isocitrate from oxaloacetate: step 1/2. This Rickettsia slovaca (strain 13-B) protein is Citrate synthase (gltA).